The sequence spans 218 residues: Small ribosomal subunit protein uS3c (218 aa).

The region spanning 47-118 (VQKNIRISSG…KLNIAITRIS (72 aa)) is the KH type-2 domain.

Belongs to the universal ribosomal protein uS3 family. Part of the 30S ribosomal subunit.

It is found in the plastid. Its subcellular location is the chloroplast. The polypeptide is Small ribosomal subunit protein uS3c (rps3) (Aethionema cordifolium (Lebanon stonecress)).